The sequence spans 199 residues: ATP-dependent Clp protease proteolytic subunit (199 aa).

Ser-98 acts as the Nucleophile in catalysis. His-123 is a catalytic residue.

The protein belongs to the peptidase S14 family. In terms of assembly, fourteen ClpP subunits assemble into 2 heptameric rings which stack back to back to give a disk-like structure with a central cavity, resembling the structure of eukaryotic proteasomes.

It is found in the cytoplasm. It carries out the reaction Hydrolysis of proteins to small peptides in the presence of ATP and magnesium. alpha-casein is the usual test substrate. In the absence of ATP, only oligopeptides shorter than five residues are hydrolyzed (such as succinyl-Leu-Tyr-|-NHMec, and Leu-Tyr-Leu-|-Tyr-Trp, in which cleavage of the -Tyr-|-Leu- and -Tyr-|-Trp bonds also occurs).. Its function is as follows. Cleaves peptides in various proteins in a process that requires ATP hydrolysis. Has a chymotrypsin-like activity. Plays a major role in the degradation of misfolded proteins. This chain is ATP-dependent Clp protease proteolytic subunit, found in Clostridium botulinum (strain Alaska E43 / Type E3).